The chain runs to 133 residues: DNA-binding protein StpA (133 aa).

The interval 81–115 (AMPRSAKKRQPRPAKYRFTDFNGEEKTWTGQGRTP) is disordered. The segment covering 85–95 (SAKKRQPRPAK) has biased composition (basic residues). Residues 111–116 (QGRTPK) mediate DNA binding.

The protein belongs to the histone-like protein H-NS family. In terms of assembly, forms homodimers, can interact with H-NS.

The protein resides in the cytoplasm. The protein localises to the nucleoid. Functionally, a DNA-binding protein that acts in a fashion similar to H-NS, repressing gene transcription. A subset of H-NS/StpA-regulated genes require auxillary proteins for repression; these auxillary proteins (Hha and other similar proteins) may also modulate oligomerization of the H-NS/StpA complex. The sequence is that of DNA-binding protein StpA (stpA) from Salmonella typhi.